The primary structure comprises 284 residues: Bifunctional protein FolD (284 aa).

NADP(+) is bound by residues 165-167 (GRS), serine 190, and isoleucine 231.

It belongs to the tetrahydrofolate dehydrogenase/cyclohydrolase family. As to quaternary structure, homodimer.

It catalyses the reaction (6R)-5,10-methylene-5,6,7,8-tetrahydrofolate + NADP(+) = (6R)-5,10-methenyltetrahydrofolate + NADPH. The catalysed reaction is (6R)-5,10-methenyltetrahydrofolate + H2O = (6R)-10-formyltetrahydrofolate + H(+). It participates in one-carbon metabolism; tetrahydrofolate interconversion. Its function is as follows. Catalyzes the oxidation of 5,10-methylenetetrahydrofolate to 5,10-methenyltetrahydrofolate and then the hydrolysis of 5,10-methenyltetrahydrofolate to 10-formyltetrahydrofolate. In Streptococcus thermophilus (strain ATCC BAA-491 / LMD-9), this protein is Bifunctional protein FolD.